We begin with the raw amino-acid sequence, 197 residues long: Peptide deformylase (197 aa).

The Fe cation site is built by C106 and H148. Residue E149 is part of the active site. A Fe cation-binding site is contributed by H152.

It belongs to the polypeptide deformylase family. The cofactor is Fe(2+).

The enzyme catalyses N-terminal N-formyl-L-methionyl-[peptide] + H2O = N-terminal L-methionyl-[peptide] + formate. Removes the formyl group from the N-terminal Met of newly synthesized proteins. Requires at least a dipeptide for an efficient rate of reaction. N-terminal L-methionine is a prerequisite for activity but the enzyme has broad specificity at other positions. The sequence is that of Peptide deformylase from Mycobacterium marinum (strain ATCC BAA-535 / M).